Reading from the N-terminus, the 265-residue chain is S-adenosylmethionine decarboxylase proenzyme (265 aa).

Residue Ser-114 is the Schiff-base intermediate with substrate; via pyruvic acid of the active site. Position 114 is a pyruvic acid (Ser); by autocatalysis (Ser-114). The Proton acceptor; for processing activity role is filled by His-119. Residue Cys-142 is the Proton donor; for catalytic activity of the active site.

Belongs to the prokaryotic AdoMetDC family. Type 2 subfamily. As to quaternary structure, heterooctamer of four alpha and four beta chains arranged as a tetramer of alpha/beta heterodimers. It depends on pyruvate as a cofactor. Is synthesized initially as an inactive proenzyme. Formation of the active enzyme involves a self-maturation process in which the active site pyruvoyl group is generated from an internal serine residue via an autocatalytic post-translational modification. Two non-identical subunits are generated from the proenzyme in this reaction, and the pyruvate is formed at the N-terminus of the alpha chain, which is derived from the carboxyl end of the proenzyme. The post-translation cleavage follows an unusual pathway, termed non-hydrolytic serinolysis, in which the side chain hydroxyl group of the serine supplies its oxygen atom to form the C-terminus of the beta chain, while the remainder of the serine residue undergoes an oxidative deamination to produce ammonia and the pyruvoyl group blocking the N-terminus of the alpha chain.

It catalyses the reaction S-adenosyl-L-methionine + H(+) = S-adenosyl 3-(methylsulfanyl)propylamine + CO2. It participates in amine and polyamine biosynthesis; S-adenosylmethioninamine biosynthesis; S-adenosylmethioninamine from S-adenosyl-L-methionine: step 1/1. Its function is as follows. Catalyzes the decarboxylation of S-adenosylmethionine to S-adenosylmethioninamine (dcAdoMet), the propylamine donor required for the synthesis of the polyamines spermine and spermidine from the diamine putrescine. The polypeptide is S-adenosylmethionine decarboxylase proenzyme (Buchnera aphidicola subsp. Acyrthosiphon pisum (strain APS) (Acyrthosiphon pisum symbiotic bacterium)).